Here is a 493-residue protein sequence, read N- to C-terminus: Lysine--tRNA ligase (493 aa).

Mg(2+)-binding residues include Glu-402 and Glu-409.

This sequence belongs to the class-II aminoacyl-tRNA synthetase family. As to quaternary structure, homodimer. The cofactor is Mg(2+).

The protein localises to the cytoplasm. The enzyme catalyses tRNA(Lys) + L-lysine + ATP = L-lysyl-tRNA(Lys) + AMP + diphosphate. In Ureaplasma parvum serovar 3 (strain ATCC 27815 / 27 / NCTC 11736), this protein is Lysine--tRNA ligase.